A 421-amino-acid polypeptide reads, in one-letter code: Tryptophan synthase beta chain (421 aa).

Lys-110 is subject to N6-(pyridoxal phosphate)lysine.

It belongs to the TrpB family. In terms of assembly, tetramer of two alpha and two beta chains. The cofactor is pyridoxal 5'-phosphate.

The enzyme catalyses (1S,2R)-1-C-(indol-3-yl)glycerol 3-phosphate + L-serine = D-glyceraldehyde 3-phosphate + L-tryptophan + H2O. The protein operates within amino-acid biosynthesis; L-tryptophan biosynthesis; L-tryptophan from chorismate: step 5/5. Functionally, the beta subunit is responsible for the synthesis of L-tryptophan from indole and L-serine. This is Tryptophan synthase beta chain (trpB) from Mycobacterium intracellulare.